Reading from the N-terminus, the 412-residue chain is CCA-adding enzyme (412 aa).

ATP-binding residues include S41 and K44. 2 residues coordinate CTP: S41 and K44. Residues D53, D55, and D106 each coordinate Mg(2+). Residues H129, K149, and Y158 each coordinate ATP. The CTP site is built by H129, K149, and Y158.

The protein belongs to the tRNA nucleotidyltransferase/poly(A) polymerase family. Archaeal CCA-adding enzyme subfamily. Homodimer. It depends on Mg(2+) as a cofactor.

The catalysed reaction is a tRNA precursor + 2 CTP + ATP = a tRNA with a 3' CCA end + 3 diphosphate. It catalyses the reaction a tRNA with a 3' CCA end + 2 CTP + ATP = a tRNA with a 3' CCACCA end + 3 diphosphate. Its function is as follows. Catalyzes the addition and repair of the essential 3'-terminal CCA sequence in tRNAs without using a nucleic acid template. Adds these three nucleotides in the order of C, C, and A to the tRNA nucleotide-73, using CTP and ATP as substrates and producing inorganic pyrophosphate. tRNA 3'-terminal CCA addition is required both for tRNA processing and repair. Also involved in tRNA surveillance by mediating tandem CCA addition to generate a CCACCA at the 3' terminus of unstable tRNAs. While stable tRNAs receive only 3'-terminal CCA, unstable tRNAs are marked with CCACCA and rapidly degraded. The chain is CCA-adding enzyme from Saccharolobus islandicus (strain Y.G.57.14 / Yellowstone #1) (Sulfolobus islandicus).